Here is a 1380-residue protein sequence, read N- to C-terminus: Respiration factor 2 (1380 aa).

C2H2-type zinc fingers lie at residues 151–173 and 179–202; these read FLCP…QHSH and YLCI…QKLH. The interval 208-231 is disordered; that stretch reads TGDPRRMTPAPNSTSSFASKRRHS. Serine 231 and serine 322 each carry phosphoserine. 4 disordered regions span residues 413 to 445, 544 to 584, 624 to 643, and 652 to 688; these read NLNL…NSNN, SPKN…NIDP, SRSS…SLNH, and LNLS…KRRR. The segment covering 424–445 has biased composition (low complexity); sequence QQQQQQQQQQNSTSSTIVNSNN. Residue serine 544 is modified to Phosphoserine. Residues 544–569 show a composition bias toward polar residues; the sequence is SPKNPPTTVSDSSSTINFNPGTNNLL. Residues 575-584 are compositionally biased toward basic and acidic residues; that stretch reads PNDKDSNIDP. Residues 624-634 are compositionally biased toward low complexity; it reads SRSSIPNKSPP. Residue serine 632 is modified to Phosphoserine. Polar residues predominate over residues 652–681; that stretch reads LNLSLNGSTDLPSTPQNQLKEPSYSDPISH.

It belongs to the RSF2/TDA9 family.

It is found in the nucleus. In terms of biological role, transcription factor that regulates expression of both nuclear and mitochondrial genes, and more specifically those required for glycerol-based growth and respiration. This is Respiration factor 2 (RSF2) from Saccharomyces cerevisiae (strain ATCC 204508 / S288c) (Baker's yeast).